The sequence spans 4700 residues: StAR-related lipid transfer protein 9 (4700 aa).

Residues 3-384 (NVQVAVRVRP…LRYASSAKNI (382 aa)) form the Kinesin motor domain. Residue 103-110 (GQTGSGKT) participates in ATP binding. Over residues 310-328 (GDSGILSSPSGTSSGGAPS) the composition is skewed to low complexity. The segment at 310–331 (GDSGILSSPSGTSSGGAPSRRQ) is disordered. Positions 498 to 569 (LKEGTTKIGR…LTQGAVITLG (72 aa)) constitute an FHA domain. Basic and acidic residues-rich tracts occupy residues 631-646 (QCDE…ETSH) and 867-877 (TSEKTSSEEHL). Disordered regions lie at residues 631–652 (QCDE…QIQQ), 851–880 (WDPS…LPQA), 1057–1104 (KKSS…SDTD), and 1128–1188 (ERKW…GFTA). Positions 1134 to 1146 (PEPENSESDDSQL) are enriched in acidic residues. Phosphoserine is present on S1203. Disordered regions lie at residues 1939–1976 (MPGE…EGKN), 2014–2043 (ERNP…RVNN), 2088–2179 (DQKE…PARD), 2254–2290 (ESQV…QEEN), 2377–2403 (GVEH…SSEA), 2416–2444 (MGSH…SPQD), 2479–2539 (LNKV…PRLL), 2589–2613 (RVAG…EGEA), 2642–2678 (LSAD…RKRR), 2696–2731 (SSSS…PVEE), 2765–2789 (PQET…PRTL), 2821–2852 (VQNS…ASPK), 2892–2955 (SKHS…PCRQ), 3124–3144 (NAQV…PHTL), 3199–3241 (HTCS…GLDG), 3274–3412 (SLRQ…MPST), 3564–3611 (IALG…KGSA), 3766–3790 (SDTS…AEET), 3830–3884 (LPSV…RVQK), 3906–3991 (ASTQ…SPKL), 4033–4086 (PEKV…QHLS), and 4153–4193 (PGGL…EWSK). Over residues 2088–2100 (DQKEQEKTDHAFR) the composition is skewed to basic and acidic residues. The segment covering 2103 to 2118 (SSGNPLPSKDQPSSPR) has biased composition (polar residues). Residues 2119–2129 (QTDDTVFRDSE) are compositionally biased toward basic and acidic residues. Polar residues predominate over residues 2137–2148 (SIGNHPQVQKIT). Residues 2153–2169 (RSREGVRESEPVREHTH) show a composition bias toward basic and acidic residues. Polar residues predominate over residues 2254 to 2266 (ESQVAEHVSSSNQ). 2 stretches are compositionally biased toward basic and acidic residues: residues 2267–2279 (EEPK…EEMP) and 2379–2391 (EHQD…RSHS). A compositionally biased stretch (basic and acidic residues) spans 2500-2510 (QASKPRQKAEK). Residues 2642-2653 (LSADSFESLPNT) are compositionally biased toward polar residues. Residues 2712–2729 (PSSADPLAPDSPRSSAPV) show a composition bias toward low complexity. The segment covering 2916–2925 (APCRHPREAL) has biased composition (basic and acidic residues). A compositionally biased stretch (polar residues) spans 3124-3141 (NAQVCQTNPEPPATTQGP). 3 stretches are compositionally biased toward polar residues: residues 3274–3285 (SLRQNETPQPAA), 3320–3339 (SSPT…QELN), and 3368–3387 (SGKS…QKAS). A compositionally biased stretch (basic and acidic residues) spans 3388–3397 (SRLDDGTTDH). The span at 3857 to 3872 (SSPSPSSPHSPGLFPS) shows a compositional bias: low complexity. Over residues 3906-3924 (ASTQEPGLSPGSLTLSAPS) the composition is skewed to polar residues. Residues 3958–3975 (LGGSQRGRSSLQRSNGRS) are compositionally biased toward low complexity. Residues 4048–4065 (EPSQWQSRTENGGESSAS) show a composition bias toward polar residues. The stretch at 4334-4387 (SDIELMLQDYQQAHEEAKVEIARARDQLRERTEQEKLRIHQKIISQLLKEEDKL) forms a coiled coil. Residues 4397-4411 (CTSSNGSLSSGMTSG) are compositionally biased toward low complexity. Residues 4397 to 4419 (CTSSNGSLSSGMTSGYNSSPALS) form a disordered region. An START domain is found at 4483–4700 (SYQDLAKHVV…IARLASFLGR (218 aa)).

Belongs to the TRAFAC class myosin-kinesin ATPase superfamily. Kinesin family. As to quaternary structure, interacts with ATAD3A. Expressed in the central nervous system, muscle cells (heart and skeletal muscle), pancreas, prostate and lung.

It localises to the cytoplasm. It is found in the cytoskeleton. Its subcellular location is the microtubule organizing center. The protein localises to the centrosome. The protein resides in the centriole. It localises to the nucleus. Its function is as follows. Microtubule-dependent motor protein required for spindle pole assembly during mitosis. Required to stabilize the pericentriolar material (PCM). The sequence is that of StAR-related lipid transfer protein 9 (STARD9) from Homo sapiens (Human).